A 607-amino-acid chain; its full sequence is Aspartate--tRNA(Asp/Asn) ligase (607 aa).

Glu176 provides a ligand contact to L-aspartate. Positions 200–203 (QQFK) are aspartate. Residues Arg222 and His456 each coordinate L-aspartate. 222–224 (RDE) provides a ligand contact to ATP. Residue Glu496 coordinates ATP. Residue Arg503 participates in L-aspartate binding. ATP is bound at residue 548-551 (GIDR).

Belongs to the class-II aminoacyl-tRNA synthetase family. Type 1 subfamily. In terms of assembly, homodimer.

The protein resides in the cytoplasm. The catalysed reaction is tRNA(Asx) + L-aspartate + ATP = L-aspartyl-tRNA(Asx) + AMP + diphosphate. Its function is as follows. Aspartyl-tRNA synthetase with relaxed tRNA specificity since it is able to aspartylate not only its cognate tRNA(Asp) but also tRNA(Asn). Reaction proceeds in two steps: L-aspartate is first activated by ATP to form Asp-AMP and then transferred to the acceptor end of tRNA(Asp/Asn). The sequence is that of Aspartate--tRNA(Asp/Asn) ligase from Parvibaculum lavamentivorans (strain DS-1 / DSM 13023 / NCIMB 13966).